The following is a 335-amino-acid chain: Probable UDP-N-acetylglucosamine pyrophosphorylase (335 aa).

The short motif at 45–48 (LSGG) is the Substrate binding element. Residues 45–48 (LSGG), Lys59, Gln120, and Gly145 each bind UTP. Asn146 serves as a coordination point for substrate. Asp170 is a binding site for UTP. Positions 218 to 219 (EY) match the Substrate binding motif. Lys278 is a UTP binding site. Lys308 is a binding site for substrate.

It belongs to the UDPGP type 1 family.

The protein localises to the cytoplasm. It carries out the reaction N-acetyl-alpha-D-glucosamine 1-phosphate + UTP + H(+) = UDP-N-acetyl-alpha-D-glucosamine + diphosphate. It functions in the pathway nucleotide-sugar biosynthesis; UDP-N-acetyl-alpha-D-glucosamine biosynthesis; UDP-N-acetyl-alpha-D-glucosamine from N-acetyl-alpha-D-glucosamine 1-phosphate: step 1/1. The chain is Probable UDP-N-acetylglucosamine pyrophosphorylase (UAP1) from Encephalitozoon cuniculi (strain GB-M1) (Microsporidian parasite).